Consider the following 399-residue polypeptide: F-box protein At1g10110 (399 aa).

An F-box domain is found at 9 to 56 (PNWSELVTDILSLVFKHLSFTDFARAKTVCSSWYFASKSSSPRKNHTP).

This is F-box protein At1g10110 from Arabidopsis thaliana (Mouse-ear cress).